The primary structure comprises 83 residues: Apolipoprotein C-I, basic form (83 aa).

Residues 1–26 (MRLFLSLPVLVVVLSMVLEGPAPAQG) form the signal peptide.

It belongs to the apolipoprotein C1 family.

The protein resides in the secreted. Functionally, inhibitor of lipoprotein binding to the low density lipoprotein (LDL) receptor, LDL receptor-related protein, and very low density lipoprotein (VLDL) receptor. Associates with high density lipoproteins (HDL) and the triacylglycerol-rich lipoproteins in the plasma and makes up about 10% of the protein of the VLDL and 2% of that of HDL. Appears to interfere directly with fatty acid uptake and is also the major plasma inhibitor of cholesteryl ester transfer protein (CETP). Binds free fatty acids and reduces their intracellular esterification. Modulates the interaction of APOE with beta-migrating VLDL and inhibits binding of beta-VLDL to the LDL receptor-related protein. The polypeptide is Apolipoprotein C-I, basic form (APOC1B) (Cercocebus atys (Sooty mangabey)).